Consider the following 305-residue polypeptide: Porphobilinogen deaminase (305 aa).

C243 bears the S-(dipyrrolylmethanemethyl)cysteine mark.

Belongs to the HMBS family. Monomer. It depends on dipyrromethane as a cofactor.

It catalyses the reaction 4 porphobilinogen + H2O = hydroxymethylbilane + 4 NH4(+). It functions in the pathway porphyrin-containing compound metabolism; protoporphyrin-IX biosynthesis; coproporphyrinogen-III from 5-aminolevulinate: step 2/4. Functionally, tetrapolymerization of the monopyrrole PBG into the hydroxymethylbilane pre-uroporphyrinogen in several discrete steps. The polypeptide is Porphobilinogen deaminase (Limosilactobacillus reuteri (strain DSM 20016) (Lactobacillus reuteri)).